A 192-amino-acid chain; its full sequence is MSAAEVIKLVVIGDGAVGKTCLLISYANNRFPEDYIPTVFDNYVVNLTAGDRNIELGLWDTAGQEEYDKLRPLSYANANVFLICFSITNPVSFENVYTKWYPEVMHFCPEVPQILVGTKLDTRDDRGVLDKLQQTGHKPITTEQGNDLARRIKAIKYMECSAKTSQNLKQVFDEAIKSVLFIKKKKSKCIVM.

Position 13–20 (13–20 (GDGAVGKT)) interacts with GTP. The Effector region motif lies at 35–43 (YIPTVFDNY). Residues 60–64 (DTAGQ) and 118–121 (TKLD) each bind GTP. Cys189 carries the post-translational modification Cysteine methyl ester. Cys189 carries the S-geranylgeranyl cysteine lipid modification. Residues 190 to 192 (IVM) constitute a propeptide, removed in mature form.

The protein belongs to the small GTPase superfamily. Rho family. In terms of assembly, interacts with pakB.

It is found in the cell membrane. The protein is Rho-related protein racC (racC) of Dictyostelium discoideum (Social amoeba).